The primary structure comprises 223 residues: Golgi SNAP receptor complex member 1-1 (223 aa).

Topologically, residues 1–201 (MDVPSSWDAL…AAIKRKKSMD (201 aa)) are cytoplasmic. Residues 8 to 67 (DALRKQARKIEAQLDEQMHSYRRLVSTKALSKSDGNESDLEAGIDLLLRQLQQVNAQMQA) adopt a coiled-coil conformation. Residues 202 to 222 (TIILSLVAAVCTFLIFIYWIT) traverse the membrane as a helical; Anchor for type IV membrane protein segment. Position 223 (Lys223) is a topological domain, vesicular.

This sequence belongs to the GOSR1 family. In terms of assembly, component of several multiprotein Golgi SNARE complexes.

The protein resides in the golgi apparatus membrane. In terms of biological role, involved in transport from the ER to the Golgi apparatus as well as in intra-Golgi transport. It belongs to a super-family of proteins called t-SNAREs or soluble NSF (N-ethylmaleimide-sensitive factor) attachment protein receptor. The polypeptide is Golgi SNAP receptor complex member 1-1 (GOS11) (Arabidopsis thaliana (Mouse-ear cress)).